Here is a 211-residue protein sequence, read N- to C-terminus: 2,3-bisphosphoglycerate-dependent phosphoglycerate mutase (211 aa).

Residues 9–16 (RHGQSEWN), 22–23 (TG), Arg61, 88–91 (ERDY), Lys99, 115–116 (RR), and 159–160 (GN) each bind substrate. The active-site Tele-phosphohistidine intermediate is His10. The Proton donor/acceptor role is filled by Glu88.

The protein belongs to the phosphoglycerate mutase family. BPG-dependent PGAM subfamily. As to quaternary structure, homodimer.

It catalyses the reaction (2R)-2-phosphoglycerate = (2R)-3-phosphoglycerate. Its pathway is carbohydrate degradation; glycolysis; pyruvate from D-glyceraldehyde 3-phosphate: step 3/5. In terms of biological role, catalyzes the interconversion of 2-phosphoglycerate and 3-phosphoglycerate. This Sinorhizobium fredii (strain NBRC 101917 / NGR234) protein is 2,3-bisphosphoglycerate-dependent phosphoglycerate mutase.